The sequence spans 293 residues: Ribosomal RNA small subunit methyltransferase A (293 aa).

Residues Asn38, Val40, Gly65, Glu86, Asp116, and Asn133 each contribute to the S-adenosyl-L-methionine site.

This sequence belongs to the class I-like SAM-binding methyltransferase superfamily. rRNA adenine N(6)-methyltransferase family. RsmA subfamily.

It localises to the cytoplasm. The catalysed reaction is adenosine(1518)/adenosine(1519) in 16S rRNA + 4 S-adenosyl-L-methionine = N(6)-dimethyladenosine(1518)/N(6)-dimethyladenosine(1519) in 16S rRNA + 4 S-adenosyl-L-homocysteine + 4 H(+). Functionally, specifically dimethylates two adjacent adenosines (A1518 and A1519) in the loop of a conserved hairpin near the 3'-end of 16S rRNA in the 30S particle. May play a critical role in biogenesis of 30S subunits. The polypeptide is Ribosomal RNA small subunit methyltransferase A (Paenarthrobacter aurescens (strain TC1)).